We begin with the raw amino-acid sequence, 489 residues long: MTPIVTVLICLRLSLGPRTHVQAGTLPKPTLWAEPGSVITQGSPVTLWCQGILETQEYRLYREKKTAPWITRIPQEIVKKGQFPIPSITWEHTGRYRCFYGSHTAGWSEPSDPLELVVTGAYIKPTLSALPSPVVTSGGNVTLHCVSQVAFGSFILCKEGEDEHPQCLNSQPRTHGWSRAIFSVGPVSPSRRWSYRCYAYDSNSPHVWSLPSDLLELLVLGVSKKPSLSVQPGPIVAPGESLTLQCVSDVSYDRFVLYKEGERDFLQLPGPQPQAGLSQANFTLGPVSRSYGGQYRCSGAYNLSSEWSAPSDPLDILIAGQFRGRPFISVHPGPTVASGENVTLLCQSWGPFHTFLLTKAGAADAPLRLRSIHEYPKYQAEFPMSPVTSAHSGTYRCYGSLSSNPYLLSHPSDSLELMVSGAAETLSPPQNKSDSKAGAANTLSPSQNKTASHPQDYTVENLIRMGIAGLVLVVLGILLFEAQHSQRSL.

The N-terminal stretch at 1–16 (MTPIVTVLICLRLSLG) is a signal peptide. Over 17-461 (PRTHVQAGTL…SHPQDYTVEN (445 aa)) the chain is Extracellular. Ig-like C2-type domains lie at 27–116 (PKPT…PLEL), 119–224 (TGAY…GVSK), 226–315 (PSLS…DPLD), and 326–415 (PFIS…SDSL). The cysteines at positions 49 and 98 are disulfide-linked. N-linked (GlcNAc...) asparagine glycosylation occurs at Asn140. 3 cysteine pairs are disulfide-bonded: Cys145–Cys197, Cys157–Cys167, and Cys246–Cys297. N-linked (GlcNAc...) asparagine glycosylation is found at Asn281, Asn302, and Asn341. A disulfide bridge connects residues Cys346 and Cys397. The interval 425–453 (TLSPPQNKSDSKAGAANTLSPSQNKTASH) is disordered. N-linked (GlcNAc...) asparagine glycans are attached at residues Asn431 and Asn448. Positions 441-453 (NTLSPSQNKTASH) are enriched in polar residues. A helical membrane pass occupies residues 462-482 (LIRMGIAGLVLVVLGILLFEA). Residues 483-489 (QHSQRSL) are Cytoplasmic-facing.

Detected in monocytes and B-cells.

It localises to the membrane. Functionally, may act as receptor for class I MHC antigens. The sequence is that of Leukocyte immunoglobulin-like receptor subfamily A member 1 (LILRA1) from Homo sapiens (Human).